The primary structure comprises 90 residues: DNA-directed RNA polymerase subunit omega (90 aa).

The protein belongs to the RNA polymerase subunit omega family. As to quaternary structure, the RNAP catalytic core consists of 2 alpha, 1 beta, 1 beta' and 1 omega subunit. When a sigma factor is associated with the core the holoenzyme is formed, which can initiate transcription.

The enzyme catalyses RNA(n) + a ribonucleoside 5'-triphosphate = RNA(n+1) + diphosphate. In terms of biological role, promotes RNA polymerase assembly. Latches the N- and C-terminal regions of the beta' subunit thereby facilitating its interaction with the beta and alpha subunits. Required for kasugamycin production and aerial mycelium formation in S.kasugaensis and responsible for pleiotropy. The sequence is that of DNA-directed RNA polymerase subunit omega (rpoZ) from Streptomyces kasugaensis.